We begin with the raw amino-acid sequence, 663 residues long: Polyunsaturated fatty acid lipoxygenase ALOX15 (663 aa).

The PLAT domain occupies 2–115; sequence GVYRIRVSTG…ILSLPEGTGC (114 aa). Residues 116–663 enclose the Lipoxygenase domain; that stretch reads TVVEDSQGLF…PSMVENSVAI (548 aa). The residue at position 149 (Ser149) is a Phosphoserine. Positions 361, 366, 541, 545, and 663 each coordinate Fe cation.

The protein belongs to the lipoxygenase family. Interacts with PEBP1; in response to IL13/interleukin-13, prevents the interaction of PEBP1 with RAF1 to activate the ERK signaling cascade. Requires Fe cation as cofactor. In terms of tissue distribution, detected in leukocytes, lung and aorta.

The protein resides in the cytoplasm. It localises to the cytosol. The protein localises to the cell membrane. Its subcellular location is the lipid droplet. It catalyses the reaction (5Z,8Z,11Z,14Z)-eicosatetraenoate + O2 = (12S)-hydroperoxy-(5Z,8Z,10E,14Z)-eicosatetraenoate. It carries out the reaction (5Z,8Z,11Z,14Z)-eicosatetraenoate + O2 = (15S)-hydroperoxy-(5Z,8Z,11Z,13E)-eicosatetraenoate. The catalysed reaction is (9Z,12Z)-octadecadienoate + O2 = (13S)-hydroperoxy-(9Z,11E)-octadecadienoate. The enzyme catalyses (12S)-hydroperoxy-(5Z,8Z,10E,14Z)-eicosatetraenoate = (8S)-hydroxy-(11S,12S)-epoxy-(5Z,9E,14Z)-eicosatrienoate. It catalyses the reaction (5Z,8Z,11Z,14Z)-eicosatetraenoate + 2 O2 = (14R,15S)-dihydroperoxy-(5Z,8Z,10E,12E)-eicosatetraenoate. It carries out the reaction (5Z,8Z,11Z,14Z)-eicosatetraenoate + 2 O2 = (8S,15S)-dihydroperoxy-(5Z,9E,11Z,13E)-eicosatetraenoate. The catalysed reaction is (14S,15R)-epoxy-(5Z,8Z,11Z)-eicosatrienoate + O2 = (8S)-hydroperoxy-(14S,15R)-epoxy-(5Z,9E,11Z)-eicosatrienoate. The enzyme catalyses (14S,15R)-epoxy-(5Z,8Z,11Z)-eicosatrienoate + O2 = (12S)-hydroperoxy-(14S,15R)-epoxy-(5Z,8Z,10E)-eicosatrienoate. It catalyses the reaction (14R,15S)-epoxy-(5Z,8Z,11Z)-eicosatrienoate + O2 = (5S)-hydroperoxy-(14R,15S)-epoxy-(6E,8Z,11Z)-eicosatrienoate. It carries out the reaction (14R,15S)-epoxy-(5Z,8Z,11Z)-eicosatrienoate + O2 = (12S)-hydroperoxy-(14R,15S)-epoxy-(5Z,8Z,10E)-eicosatrienoate. The catalysed reaction is (15R)-hydroperoxy-(5Z,8Z,11Z,13E)-eicosatetraenoate = 15-oxo-(5Z,8Z,11Z,13E)-eicosatetraenoate + H2O. The enzyme catalyses (15S)-hydroperoxy-(5Z,8Z,11Z,13E)-eicosatetraenoate = (14S,15S)-epoxy-(5Z,8Z,10E,12E)-eicosatetraenoate + H2O. It catalyses the reaction (4Z,7Z,10Z,13Z,16Z)-docosapentaenoate + O2 = 14-hydroperoxy-(4Z,7Z,10Z,12E,16Z)-docosapentaenoate. It carries out the reaction (7Z,10Z,13Z,16Z,19Z)-docosapentaenoate + O2 = 14-hydroperoxy-(7Z,10Z,12E,16Z,19Z)-docosapentaenoate. The catalysed reaction is (4Z,7Z,10Z,13Z,16Z,19Z)-docosahexaenoate + O2 = (14S)-hydroperoxy-(4Z,7Z,10Z,12E,16Z,19Z)-docosahexaenoate. The enzyme catalyses (4Z,7Z,10Z,13Z,16Z,19Z)-docosahexaenoate + O2 = (17S)-hydroperoxy-(4Z,7Z,10Z,13Z,15E,19Z)-docosahexaenoate. It catalyses the reaction (7S)-hydroperoxy-(4Z,8E,10Z,13Z,16Z,19Z)-docosahexaenoate + O2 = (7S,14S)-dihydroperoxy-(4Z,8E,10Z,12E,16Z,19Z)-docosahexaenoate. It carries out the reaction (7S)-hydroperoxy-(4Z,8E,10Z,13Z,16Z,19Z)-docosahexaenoate + O2 = (7S,17S)-dihydroperoxy-(4Z,8E,10Z,13Z,15E,19Z)-docosahexaenoate. The catalysed reaction is (4Z,7Z,10Z,13Z,16Z,19Z)-docosahexaenoate + O2 = (11S)-hydroperoxy-(4Z,7Z,9E,13Z,16Z,19Z)-docosahexaenoate. The enzyme catalyses N-(5Z,8Z,11Z,14Z)-eicosatetraenoyl-taurine + O2 = N-(12S)-hydroperoxy-(5Z,8Z,10E,14Z)-eicosatetraenoyl-taurine. It catalyses the reaction N-(5Z,8Z,11Z,14Z)-eicosatetraenoyl-gamma-aminobutanoate + O2 = N-(12S)-hydroperoxy-(5Z,8Z,10E,14Z)-eicosatetraenoyl-gamma-aminobutanoate. It carries out the reaction N-(5Z,8Z,11Z,14Z)-eicosatetraenoyl-glycine + O2 = N-(12S)-hydroperoxy-(5Z,8Z,10E,14Z)-eicosatetraenoyl-glycine. The catalysed reaction is N-(5Z,8Z,11Z,14Z)-eicosatetraenoyl-L-alanine + O2 = N-(12S)-hydroperoxy-(5Z,8Z,10E,14Z)-eicosatetraenoyl-alanine. The enzyme catalyses N-(5Z,8Z,11Z,14Z)-eicosatetraenoyl-taurine + O2 = N-(15S)-hydroperoxy-(5Z,8Z,11Z,13E)-eicosatetraenoyl-taurine. It catalyses the reaction N-(5Z,8Z,11Z,14Z)-eicosatetraenoyl-gamma-aminobutanoate + O2 = N-(15S)-hydroperoxy-(5Z,8Z,11Z,13E)-eicosatetraenoyl-gamma-aminobutanoate. It carries out the reaction N-(5Z,8Z,11Z,14Z)-eicosatetraenoyl-glycine + O2 = N-(15S)-hydroperoxy-(5Z,8Z,11Z,13E)-eicosatetraenoyl-glycine. The catalysed reaction is N-(5Z,8Z,11Z,14Z)-eicosatetraenoyl-L-alanine + O2 = N-(15S)-hydroperoxy-(5Z,8Z,11Z,13E)-eicosatetraenoyl-alanine. Its pathway is lipid metabolism; hydroperoxy eicosatetraenoic acid biosynthesis. Its function is as follows. Non-heme iron-containing dioxygenase that catalyzes the stereo-specific peroxidation of free and esterified polyunsaturated fatty acids generating a spectrum of bioactive lipid mediators. It inserts peroxyl groups at C12 or C15 of arachidonate ((5Z,8Z,11Z,14Z)-eicosatetraenoate) producing both 12-hydroperoxyeicosatetraenoate/12-HPETE and 15-hydroperoxyeicosatetraenoate/15-HPETE. It may then act on 12-HPETE to produce hepoxilins, which may show pro-inflammatory properties. Can also peroxidize linoleate ((9Z,12Z)-octadecadienoate) to 13-hydroperoxyoctadecadienoate. May participate in the sequential oxidations of DHA ((4Z,7Z,10Z,13Z,16Z,19Z)-docosahexaenoate) to generate specialized pro-resolving mediators (SPMs)like resolvin D5 ((7S,17S)-diHPDHA) and (7S,14S)-diHPDHA, that actively down-regulate the immune response and have anti-aggregation properties with platelets. Can convert epoxy fatty acids to hydroperoxy-epoxides derivatives followed by an intramolecular nucleophilic substitution leading to the formation of monocyclic endoperoxides. Plays an important role during the maintenance of self-tolerance by peroxidizing membrane-bound phosphatidylethanolamine which can then signal the sorting process for clearance of apoptotic cells during inflammation and prevent an autoimmune response. In addition to its role in the immune and inflammatory responses, this enzyme may play a role in epithelial wound healing in the cornea through production of lipoxin A4 (LXA(4)) and docosahexaenoic acid-derived neuroprotectin D1 (NPD1; 10R,17S-HDHA), both lipid autacoids exhibit anti-inflammatory and neuroprotective properties. Furthermore, it may regulate actin polymerization which is crucial for several biological processes such as the phagocytosis of apoptotic cells. It is also implicated in the generation of endogenous ligands for peroxisome proliferator activated receptor (PPAR-gamma), hence modulating macrophage development and function. It may also exert a negative effect on skeletal development by regulating bone mass through this pathway. As well as participates in ER stress and downstream inflammation in adipocytes, pancreatic islets, and liver. Finally, it is also involved in the cellular response to IL13/interleukin-13. The sequence is that of Polyunsaturated fatty acid lipoxygenase ALOX15 from Rattus norvegicus (Rat).